The primary structure comprises 122 residues: Acidic phospholipase A2 Tpu-E6b (122 aa).

Cystine bridges form between Cys26–Cys115, Cys28–Cys44, Cys43–Cys95, Cys49–Cys122, Cys50–Cys88, Cys57–Cys81, and Cys75–Cys86. Tyr27, Gly29, and Gly31 together coordinate Ca(2+). His47 is a catalytic residue. Asp48 provides a ligand contact to Ca(2+). Asp89 is an active-site residue.

In terms of assembly, monomer. Ca(2+) is required as a cofactor. As to expression, expressed by the venom gland.

The protein localises to the secreted. The catalysed reaction is a 1,2-diacyl-sn-glycero-3-phosphocholine + H2O = a 1-acyl-sn-glycero-3-phosphocholine + a fatty acid + H(+). In terms of biological role, snake venom phospholipase A2 (PLA2) that weakly inhibits ADP-induced platelet aggregation when tested on platelet rich plasma from human and rabbit blood (15-25% of inhibition at 5-10 ug of enzyme). Exhibits moderate hydrolytic activities toward L-dipalmitoyl phosphatidylcholine. PLA2 catalyzes the calcium-dependent hydrolysis of the 2-acyl groups in 3-sn-phosphoglycerides. The chain is Acidic phospholipase A2 Tpu-E6b from Craspedocephalus puniceus (Flat-nosed pitviper).